A 364-amino-acid chain; its full sequence is Palmitoyltransferase ZDHHC9 (364 aa).

The Cytoplasmic portion of the chain corresponds to 1 to 35 (MSVMVVRKKVTRKWEKLPGRNTFCCDGRVMMARQK). A helical transmembrane segment spans residues 36-56 (GIFYLTLFLILGTCTLFFAFE). Over 57-63 (CRYLAVQ) the chain is Lumenal. The chain crosses the membrane as a helical span at residues 64 to 84 (LSPAIPVFAAMLFLFSMATLL). Over 85-183 (RTSFSDPGVI…NCVGKRNYRY (99 aa)) the chain is Cytoplasmic. In terms of domain architecture, DHHC spans 139–189 (KYCYTCKIFRPPRASHCSICDNCVERFDHHCPWVGNCVGKRNYRYFYLFIL). Cysteine 169 serves as the catalytic S-palmitoyl cysteine intermediate. Residues 184–204 (FYLFILSLSLLTIYVFAFNIV) traverse the membrane as a helical segment. Over 205 to 228 (YVALKSLKIGFLETLKETPGTVLE) the chain is Lumenal. The chain crosses the membrane as a helical span at residues 229–249 (VLICFFTLWSVVGLTGFHTFL). At 250–364 (VALNQTTNED…PPQEASEAEK (115 aa)) the chain is on the cytoplasmic side. Positions 303-364 (PLEESGSRPP…PPQEASEAEK (62 aa)) are disordered. Residues 310–336 (RPPSTQETSSSLLPQSPASTEHMNSNE) show a composition bias toward polar residues. The segment covering 346–356 (EMPPPEPPEPP) has biased composition (pro residues).

The protein belongs to the DHHC palmitoyltransferase family. ERF2/ZDHHC9 subfamily. As to quaternary structure, interacts with GOLGA7.

The protein localises to the endoplasmic reticulum membrane. The protein resides in the golgi apparatus membrane. The enzyme catalyses L-cysteinyl-[protein] + hexadecanoyl-CoA = S-hexadecanoyl-L-cysteinyl-[protein] + CoA. Its function is as follows. Palmitoyltransferase that catalyzes the addition of palmitate onto various protein substrates, such as ADRB2, GSDMD, HRAS, NRAS and CGAS. The ZDHHC9-GOLGA7 complex is a palmitoyltransferase specific for HRAS and NRAS. May have a palmitoyltransferase activity toward the beta-2 adrenergic receptor/ADRB2 and therefore regulate G protein-coupled receptor signaling. Acts as a regulator of innate immunity by catalyzing palmitoylation of CGAS, thereby promoting CGAS homodimerization and cyclic GMP-AMP synthase activity. Activates pyroptosis by catalyzing palmitoylation of gasdermin-D (GSDMD), thereby promoting membrane translocation and pore formation of GSDMD. The polypeptide is Palmitoyltransferase ZDHHC9 (Zdhhc9) (Mus musculus (Mouse)).